We begin with the raw amino-acid sequence, 586 residues long: A-type ATP synthase subunit A (586 aa).

Residue 233–240 coordinates ATP; that stretch reads GPFGSGKT.

It belongs to the ATPase alpha/beta chains family. As to quaternary structure, has multiple subunits with at least A(3), B(3), C, D, E, F, H, I and proteolipid K(x).

Its subcellular location is the cell membrane. The enzyme catalyses ATP + H2O + 4 H(+)(in) = ADP + phosphate + 5 H(+)(out). In terms of biological role, component of the A-type ATP synthase that produces ATP from ADP in the presence of a proton gradient across the membrane. The A chain is the catalytic subunit. The protein is A-type ATP synthase subunit A of Methanococcus aeolicus (strain ATCC BAA-1280 / DSM 17508 / OCM 812 / Nankai-3).